The sequence spans 32 residues: Protamine-2 (32 aa).

Residues 1–32 (PRRRRSSSRPVRRRRARRVSRRRRRRGGRRRR) form a disordered region.

As to expression, testis.

Its subcellular location is the nucleus. The protein localises to the chromosome. In terms of biological role, protamines substitute for histones in the chromatin of sperm during the haploid phase of spermatogenesis. They compact sperm DNA into a highly condensed, stable and inactive complex. This is Protamine-2 from Oncorhynchus mykiss (Rainbow trout).